A 178-amino-acid chain; its full sequence is Sec-independent protein translocase protein TatB (178 aa).

A helical membrane pass occupies residues 1-21; sequence MFDIGWSELLVIGVVALIAIG. Positions 146–178 are disordered; sequence LAIVREIKPEPQPQPADGAAPAEPERLKDAKAS. Over residues 168 to 178 the composition is skewed to basic and acidic residues; sequence EPERLKDAKAS.

Belongs to the TatB family. As to quaternary structure, the Tat system comprises two distinct complexes: a TatABC complex, containing multiple copies of TatA, TatB and TatC subunits, and a separate TatA complex, containing only TatA subunits. Substrates initially bind to the TatABC complex, which probably triggers association of the separate TatA complex to form the active translocon.

The protein localises to the cell inner membrane. Its function is as follows. Part of the twin-arginine translocation (Tat) system that transports large folded proteins containing a characteristic twin-arginine motif in their signal peptide across membranes. Together with TatC, TatB is part of a receptor directly interacting with Tat signal peptides. TatB may form an oligomeric binding site that transiently accommodates folded Tat precursor proteins before their translocation. This Bradyrhizobium sp. (strain ORS 278) protein is Sec-independent protein translocase protein TatB.